A 257-amino-acid polypeptide reads, in one-letter code: UPF0246 protein ECA3888 (257 aa).

The protein belongs to the UPF0246 family.

In Pectobacterium atrosepticum (strain SCRI 1043 / ATCC BAA-672) (Erwinia carotovora subsp. atroseptica), this protein is UPF0246 protein ECA3888.